Here is a 376-residue protein sequence, read N- to C-terminus: PqqA peptide cyclase (376 aa).

Positions valine 7–alanine 222 constitute a Radical SAM core domain. Residues cysteine 21, cysteine 25, and cysteine 28 each coordinate [4Fe-4S] cluster.

This sequence belongs to the radical SAM superfamily. PqqE family. As to quaternary structure, interacts with PqqD. The interaction is necessary for activity of PqqE. [4Fe-4S] cluster serves as cofactor.

It carries out the reaction [PQQ precursor protein] + S-adenosyl-L-methionine = E-Y cross-linked-[PQQ precursor protein] + 5'-deoxyadenosine + L-methionine + H(+). Its pathway is cofactor biosynthesis; pyrroloquinoline quinone biosynthesis. Functionally, catalyzes the cross-linking of a glutamate residue and a tyrosine residue in the PqqA protein as part of the biosynthesis of pyrroloquinoline quinone (PQQ). The polypeptide is PqqA peptide cyclase (Pseudomonas putida (strain ATCC 47054 / DSM 6125 / CFBP 8728 / NCIMB 11950 / KT2440)).